Here is a 1000-residue protein sequence, read N- to C-terminus: Lysine-specific histone demethylase 1 (1000 aa).

A disordered region spans residues 104-123 (RRPAGRRGRPALNTSNSLER). Residues 107 to 137 (AGRRGRPALNTSNSLERNGTRYVSAEAPISV) are a coiled coil. The SWIRM domain occupies 153–249 (CYESAIASNL…YGCIYIISSL (97 aa)). Residues 260–302 (VAII…IYEA), Glu301, and 328–329 (LA) each bind FAD. Positions 279–950 (LFAQYEQDFL…RCESQPIPED (672 aa)) are demethylase activity. Residues 434–529 (IGWYISIEAF…ADMLNSLAST (96 aa)) adopt a coiled-coil conformation. The segment at 780-800 (TYGTKRNAQQALGKEGERENK) is disordered. Residues 841 to 921 (SRPSANPYLL…NYSTRLEEYQ (81 aa)) constitute a DNA-binding region (HMG box). 908 to 909 (AR) serves as a coordination point for FAD. Basic and acidic residues predominate over residues 959-972 (EQEDEHLHPEKEGM). Residues 959–1000 (EQEDEHLHPEKEGMSVENSDDDYHDDLDYEDSISEVFPDNFS) are disordered. Positions 976-991 (NSDDDYHDDLDYEDSI) are enriched in acidic residues.

This sequence belongs to the flavin monoamine oxidase family. In terms of assembly, component of the SWM histone demethylase complex composed of at least lsd1, lsd2, phf1 and phf2. Interacts directly with lsd2. FAD is required as a cofactor.

It localises to the nucleus. Catalytic component of the SWM histone demethylase complex that specifically demethylates H3K9me2, a specific tag for epigenetic transcriptional activation, thereby acting as a corepressor. Acts by oxidizing the substrate by FAD to generate the corresponding imine that is subsequently hydrolyzed. Has a role in regulating heterochromatin propagation and euchromatic transcription. Also has a gene activating role. This Schizosaccharomyces pombe (strain 972 / ATCC 24843) (Fission yeast) protein is Lysine-specific histone demethylase 1 (lsd1).